We begin with the raw amino-acid sequence, 98 residues long: N(2)-fixation sustaining protein CowN (98 aa).

It belongs to the CowN family.

In terms of biological role, is required to sustain N(2)-dependent growth in the presence of low levels of carbon monoxide (CO). Probably acts by protecting the N(2) fixation ability of the nitrogenase complex, which is inactivated in the presence of CO. The sequence is that of N(2)-fixation sustaining protein CowN from Trichlorobacter lovleyi (strain ATCC BAA-1151 / DSM 17278 / SZ) (Geobacter lovleyi).